The primary structure comprises 412 residues: Serine hydroxymethyltransferase (412 aa).

(6S)-5,6,7,8-tetrahydrofolate contacts are provided by residues Leu117 and 121–123 (GHL). Position 226 is an N6-(pyridoxal phosphate)lysine (Lys226). Position 349–351 (349–351 (SPF)) interacts with (6S)-5,6,7,8-tetrahydrofolate.

Belongs to the SHMT family. Homodimer. Pyridoxal 5'-phosphate is required as a cofactor.

The protein localises to the cytoplasm. It carries out the reaction (6R)-5,10-methylene-5,6,7,8-tetrahydrofolate + glycine + H2O = (6S)-5,6,7,8-tetrahydrofolate + L-serine. It functions in the pathway one-carbon metabolism; tetrahydrofolate interconversion. It participates in amino-acid biosynthesis; glycine biosynthesis; glycine from L-serine: step 1/1. Catalyzes the reversible interconversion of serine and glycine with tetrahydrofolate (THF) serving as the one-carbon carrier. This reaction serves as the major source of one-carbon groups required for the biosynthesis of purines, thymidylate, methionine, and other important biomolecules. Also exhibits THF-independent aldolase activity toward beta-hydroxyamino acids, producing glycine and aldehydes, via a retro-aldol mechanism. The polypeptide is Serine hydroxymethyltransferase (Halothermothrix orenii (strain H 168 / OCM 544 / DSM 9562)).